The following is a 562-amino-acid chain: Transmembrane E3 ubiquitin-protein ligase FLY1 (562 aa).

The signal sequence occupies residues 1 to 32 (MKKREHLGLGFFEWQIILWLSIWLAISQQALG). Topologically, residues 33-262 (LRPIREKPRS…TSVNVEVYYN (230 aa)) are lumenal. Residues 263–283 (KAVNYTLMVTFVSFLQVLLLI) form a helical membrane-spanning segment. Over 284-297 (RQMEHGNTQSGAAK) the chain is Cytoplasmic. Residues 298–318 (VSIVMIGQQAIMDAYLCLLHL) form a helical membrane-spanning segment. Over 319-321 (TAG) the chain is Lumenal. The helical transmembrane segment at 322 to 342 (ILVESLFNAFATAAFFKFVVF) threads the bilayer. The Cytoplasmic segment spans residues 343 to 373 (SIFEMRYLLAIWKATRPSNSGEGWETMRREL). The helical transmembrane segment at 374–394 (SFLYSRFYGILLGGILIMYQF) threads the bilayer. The Lumenal portion of the chain corresponds to 395 to 397 (HNY). Residues 398-418 (MQPILLLMYSFWIPQIVANVV) form a helical membrane-spanning segment. At 419–426 (RDSRKPLH) the chain is on the cytoplasmic side. A helical membrane pass occupies residues 427–447 (PYYILGMTATRLAIPLYVFGC). Over 448–458 (PHNFMRVEPNK) the chain is Lumenal. Residues 459-479 (VWCICLCTFMGLQAVILLLQH) form a helical membrane-spanning segment. At 480-562 (YFGSRCFVPR…PTCRRSLPPA (83 aa)) the chain is on the cytoplasmic side. Residues 512-556 (CVICMTAIDLRQHTSDCMVTPCEHFFHSGCLQRWMDIKMECPTCR) form an RING-type; atypical zinc finger.

Highly expressed in stems. Expressed in root xylem and seed coat.

The protein localises to the endomembrane system. The catalysed reaction is S-ubiquitinyl-[E2 ubiquitin-conjugating enzyme]-L-cysteine + [acceptor protein]-L-lysine = [E2 ubiquitin-conjugating enzyme]-L-cysteine + N(6)-ubiquitinyl-[acceptor protein]-L-lysine.. It participates in protein modification; protein ubiquitination. Functionally, E3 ubiquitin-protein ligase that regulates the degree of methylesterification of pectin in seed mucilage. May be involved in the recycling of pectin methylesterase enzymes in the endomembrane system of seed coat epidermal cells. Possesses E3 ubiquitin-protein ligase activity in vitro when associated with the E1 enzyme UBA1 and the E2 enzyme UBC8. May be involved in xylem development. In Arabidopsis thaliana (Mouse-ear cress), this protein is Transmembrane E3 ubiquitin-protein ligase FLY1.